An 87-amino-acid polypeptide reads, in one-letter code: Toxin Cll5b (87 aa).

The N-terminal stretch at M1–A19 is a signal peptide. Residues K20–S85 enclose the LCN-type CS-alpha/beta domain. 4 disulfides stabilise this stretch: C31/C84, C35/C60, C44/C65, and C48/C67. The propeptide at K86–K87 is removed by a carboxypeptidase.

It belongs to the long (4 C-C) scorpion toxin superfamily. Sodium channel inhibitor family. Beta subfamily. Expressed by the venom gland.

It is found in the secreted. Its function is as follows. Beta toxins bind voltage-independently at site-4 of sodium channels (Nav) and shift the voltage of activation toward more negative potentials thereby affecting sodium channel activation and promoting spontaneous and repetitive firing. This is Toxin Cll5b from Centruroides limpidus (Mexican scorpion).